The chain runs to 48 residues: Sperm protamine R3 isoform 2 (48 aa).

Positions alanine 1–serine 29 are enriched in basic residues. Residues alanine 1–proline 48 are disordered.

Testis.

It localises to the nucleus. The protein localises to the chromosome. Functionally, protamines substitute for histones in the chromatin of sperm during the haploid phase of spermatogenesis. They compact sperm DNA into a highly condensed, stable and inactive complex. This chain is Sperm protamine R3 isoform 2, found in Hydrolagus colliei (Spotted ratfish).